The sequence spans 675 residues: Alpha-1,4-glucan:maltose-1-phosphate maltosyltransferase (675 aa).

Positions 256, 316, and 351 each coordinate alpha-maltose 1-phosphate. The Nucleophile role is filled by D386. Residue N387 participates in alpha-maltose 1-phosphate binding. E415 (proton donor) is an active-site residue. 525 to 526 (KY) contributes to the alpha-maltose 1-phosphate binding site.

It belongs to the glycosyl hydrolase 13 family. GlgE subfamily. As to quaternary structure, homodimer.

It carries out the reaction alpha-maltose 1-phosphate + [(1-&gt;4)-alpha-D-glucosyl](n) = [(1-&gt;4)-alpha-D-glucosyl](n+2) + phosphate. Functionally, maltosyltransferase that uses maltose 1-phosphate (M1P) as the sugar donor to elongate linear or branched alpha-(1-&gt;4)-glucans. Is involved in a branched alpha-glucan biosynthetic pathway from trehalose, together with TreS, Mak and GlgB. The sequence is that of Alpha-1,4-glucan:maltose-1-phosphate maltosyltransferase from Corynebacterium glutamicum (strain ATCC 13032 / DSM 20300 / JCM 1318 / BCRC 11384 / CCUG 27702 / LMG 3730 / NBRC 12168 / NCIMB 10025 / NRRL B-2784 / 534).